Reading from the N-terminus, the 205-residue chain is RNA pyrophosphohydrolase (205 aa).

One can recognise a Nudix hydrolase domain in the interval 6 to 149 (GFRPNVGIVL…KRGVYARALR (144 aa)). The Nudix box signature appears at 38 to 59 (GGMNTDETPVEAMYRELREETG). Residues 178–205 (GSSAAGHDSPRKRPRKRNGARAMRINND) form a disordered region. Over residues 187–196 (PRKRPRKRNG) the composition is skewed to basic residues.

It belongs to the Nudix hydrolase family. RppH subfamily. It depends on a divalent metal cation as a cofactor.

Accelerates the degradation of transcripts by removing pyrophosphate from the 5'-end of triphosphorylated RNA, leading to a more labile monophosphorylated state that can stimulate subsequent ribonuclease cleavage. This Xanthomonas axonopodis pv. citri (strain 306) protein is RNA pyrophosphohydrolase.